Reading from the N-terminus, the 312-residue chain is MLHHEDESSPESDSDFDASELTDKELQEAFSQGKLKPGLNVVLEGKKKPFNDASGLKQSLKDLKNELPWVERLDVTVDPVVDTTGQNGQTDPNTSDINAEDDFQREMCFYRQAQAAVLYSLPRLRKLKVATKRPDDYFAEMAKTDQHMQKIRHKLQLKQASMEKSEKAKQLRALRKYGKKVQVEVLQKRQKEKSAMVTQIKKYQKGLSDKLDFLEGDQTPKKTPNKTGGSAAAQKAKNTPSAKRRYKDQKFGFGGKKKGSKGNTKGSYNDVSGFRGSVAHGKGPHRPGKKGGKNANKRPGKNVRQKMKSKRR.

The interval 1–32 (MLHHEDESSPESDSDFDASELTDKELQEAFSQ) is disordered. The segment covering 8–20 (SSPESDSDFDASE) has biased composition (acidic residues). Residues 140 to 176 (EMAKTDQHMQKIRHKLQLKQASMEKSEKAKQLRALRK) are a coiled coil. Residues 211–312 (LDFLEGDQTP…VRQKMKSKRR (102 aa)) form a disordered region. Positions 282–312 (KGPHRPGKKGGKNANKRPGKNVRQKMKSKRR) are enriched in basic residues.

The protein belongs to the EBP2 family.

The protein localises to the nucleus. It is found in the nucleolus. Its function is as follows. Required for the processing of the 27S pre-rRNA. In Xenopus laevis (African clawed frog), this protein is Probable rRNA-processing protein EBP2 (ebna1bp2).